We begin with the raw amino-acid sequence, 432 residues long: Ribosomal protein uS12 methylthiotransferase RimO (432 aa).

Positions 2 to 115 (IRVAVITLGC…LPEIINRVLK (114 aa)) constitute an MTTase N-terminal domain. [4Fe-4S] cluster contacts are provided by cysteine 11, cysteine 47, cysteine 78, cysteine 151, cysteine 155, and cysteine 158. One can recognise a Radical SAM core domain in the interval 137–367 (EDGKPFAYLK…MLHQQSITRA (231 aa)).

Belongs to the methylthiotransferase family. RimO subfamily. Requires [4Fe-4S] cluster as cofactor.

It localises to the cytoplasm. It carries out the reaction L-aspartate(89)-[ribosomal protein uS12]-hydrogen + (sulfur carrier)-SH + AH2 + 2 S-adenosyl-L-methionine = 3-methylsulfanyl-L-aspartate(89)-[ribosomal protein uS12]-hydrogen + (sulfur carrier)-H + 5'-deoxyadenosine + L-methionine + A + S-adenosyl-L-homocysteine + 2 H(+). Its function is as follows. Catalyzes the methylthiolation of an aspartic acid residue of ribosomal protein uS12. The polypeptide is Ribosomal protein uS12 methylthiotransferase RimO (Moorella thermoacetica (strain ATCC 39073 / JCM 9320)).